The chain runs to 600 residues: Proline--tRNA ligase (600 aa).

This sequence belongs to the class-II aminoacyl-tRNA synthetase family. ProS type 1 subfamily. In terms of assembly, homodimer.

It is found in the cytoplasm. The enzyme catalyses tRNA(Pro) + L-proline + ATP = L-prolyl-tRNA(Pro) + AMP + diphosphate. In terms of biological role, catalyzes the attachment of proline to tRNA(Pro) in a two-step reaction: proline is first activated by ATP to form Pro-AMP and then transferred to the acceptor end of tRNA(Pro). As ProRS can inadvertently accommodate and process non-cognate amino acids such as alanine and cysteine, to avoid such errors it has two additional distinct editing activities against alanine. One activity is designated as 'pretransfer' editing and involves the tRNA(Pro)-independent hydrolysis of activated Ala-AMP. The other activity is designated 'posttransfer' editing and involves deacylation of mischarged Ala-tRNA(Pro). The misacylated Cys-tRNA(Pro) is not edited by ProRS. This is Proline--tRNA ligase from Synechococcus sp. (strain RCC307).